The primary structure comprises 271 residues: MSRITERFTVLRGQGRKALVPYITAGDPQPQVTVPLMHAMVAAGADILELGVPFSDPMADGPVIQKACERALAAGTSLLDVLAMVAEFRRKDQETPVILMGYLNPIEILGYRSFAEQAAAHGVDGLLTVDMPPEEAEPLAAVCKEQGLDRIFLLAPTSSPKRIEQISALGSGFIYYVSLKGVTGASTLDVDDVSQRVAKIRHYTTMPVGVGFGIRDARSAAQIASIADAAVVGSALVKRIEQYQNRPEVIPEEVSALLRTMREAIDATENV.

Residues Glu-49 and Asp-60 each act as proton acceptor in the active site.

The protein belongs to the TrpA family. In terms of assembly, tetramer of two alpha and two beta chains.

The catalysed reaction is (1S,2R)-1-C-(indol-3-yl)glycerol 3-phosphate + L-serine = D-glyceraldehyde 3-phosphate + L-tryptophan + H2O. Its pathway is amino-acid biosynthesis; L-tryptophan biosynthesis; L-tryptophan from chorismate: step 5/5. The alpha subunit is responsible for the aldol cleavage of indoleglycerol phosphate to indole and glyceraldehyde 3-phosphate. The protein is Tryptophan synthase alpha chain of Nitrosococcus oceani (strain ATCC 19707 / BCRC 17464 / JCM 30415 / NCIMB 11848 / C-107).